The chain runs to 132 residues: Small ribosomal subunit protein uS8 (132 aa).

The protein belongs to the universal ribosomal protein uS8 family. Part of the 30S ribosomal subunit. Contacts proteins S5 and S12.

Its function is as follows. One of the primary rRNA binding proteins, it binds directly to 16S rRNA central domain where it helps coordinate assembly of the platform of the 30S subunit. The protein is Small ribosomal subunit protein uS8 of Bifidobacterium longum (strain NCC 2705).